Reading from the N-terminus, the 153-residue chain is Prefoldin subunit alpha (153 aa).

Belongs to the prefoldin subunit alpha family. Heterohexamer of two alpha and four beta subunits.

It is found in the cytoplasm. Molecular chaperone capable of stabilizing a range of proteins. Seems to fulfill an ATP-independent, HSP70-like function in archaeal de novo protein folding. This Methanothrix thermoacetophila (strain DSM 6194 / JCM 14653 / NBRC 101360 / PT) (Methanosaeta thermophila) protein is Prefoldin subunit alpha.